The following is a 420-amino-acid chain: 2',3'-cyclic-nucleotide 3'-phosphodiesterase (420 aa).

S9 carries the phosphoserine modification. The residue at position 110 (Y110) is a Phosphotyrosine. 3 positions are modified to phosphoserine: S169, S227, and S239. H250 serves as the catalytic Proton acceptor. Position 252 (T252) interacts with substrate. Phosphothreonine is present on T262. The active-site Proton donor is the H329. T331 is a binding site for substrate. S358 carries the post-translational modification Phosphoserine. C417 bears the Cysteine methyl ester mark. C417 is lipidated: S-farnesyl cysteine. Positions 418–420 (TII) are cleaved as a propeptide — removed in mature form.

The protein belongs to the 2H phosphoesterase superfamily. CNPase family. In terms of assembly, exists as monomers and homodimers.

Its subcellular location is the membrane. It localises to the melanosome. The catalysed reaction is a nucleoside 2',3'-cyclic phosphate + H2O = a nucleoside 2'-phosphate + H(+). Its function is as follows. Catalyzes the formation of 2'-nucleotide products from 2',3'-cyclic substrates. May participate in RNA metabolism in the myelinating cell, CNP is the third most abundant protein in central nervous system myelin. The protein is 2',3'-cyclic-nucleotide 3'-phosphodiesterase of Rattus norvegicus (Rat).